Reading from the N-terminus, the 347-residue chain is Protein RecA (347 aa).

64-71 (GPESSGKT) contributes to the ATP binding site.

Belongs to the RecA family.

The protein localises to the cytoplasm. Its function is as follows. Can catalyze the hydrolysis of ATP in the presence of single-stranded DNA, the ATP-dependent uptake of single-stranded DNA by duplex DNA, and the ATP-dependent hybridization of homologous single-stranded DNAs. It interacts with LexA causing its activation and leading to its autocatalytic cleavage. This chain is Protein RecA, found in Bartonella bacilliformis (strain ATCC 35685 / KC583 / Herrer 020/F12,63).